A 138-amino-acid chain; its full sequence is Large ribosomal subunit protein bL17 (138 aa).

The protein belongs to the bacterial ribosomal protein bL17 family. In terms of assembly, part of the 50S ribosomal subunit. Contacts protein L32.

This chain is Large ribosomal subunit protein bL17, found in Methylorubrum extorquens (strain PA1) (Methylobacterium extorquens).